The sequence spans 229 residues: Large ribosomal subunit protein uL1 (229 aa).

This sequence belongs to the universal ribosomal protein uL1 family. In terms of assembly, part of the 50S ribosomal subunit.

Its function is as follows. Binds directly to 23S rRNA. The L1 stalk is quite mobile in the ribosome, and is involved in E site tRNA release. In terms of biological role, protein L1 is also a translational repressor protein, it controls the translation of the L11 operon by binding to its mRNA. In Phytoplasma australiense, this protein is Large ribosomal subunit protein uL1.